We begin with the raw amino-acid sequence, 278 residues long: Prohibitin-7, mitochondrial (278 aa).

Topologically, residues 1–14 are mitochondrial matrix; that stretch reads MNVKKVPNVPGSPA. Residues 15–37 traverse the membrane as a helical; Signal-anchor for type II membrane protein segment; it reads LSALLKLGVIGGLGLYCIGSSMY. Residues 38–278 are Mitochondrial intermembrane-facing; sequence NVDGGHRAIV…NSSDLLISKQ (241 aa). A coiled-coil region spans residues 186-220; that stretch reads KEFTEAIEKKQVAAQEAERAKFIVEKAEQDKKSAI.

Belongs to the prohibitin family. Component of a prohibitin multimeric complex in mitochondrial membranes.

The protein resides in the mitochondrion inner membrane. In terms of biological role, prohibitin probably acts as a holdase/unfoldase for the stabilization of newly synthesized mitochondrial proteins. This Arabidopsis thaliana (Mouse-ear cress) protein is Prohibitin-7, mitochondrial (PHB7).